Consider the following 285-residue polypeptide: Bifunctional protein FolD (285 aa).

NADP(+)-binding positions include 165 to 167 (GRS) and serine 190.

Belongs to the tetrahydrofolate dehydrogenase/cyclohydrolase family. In terms of assembly, homodimer.

It carries out the reaction (6R)-5,10-methylene-5,6,7,8-tetrahydrofolate + NADP(+) = (6R)-5,10-methenyltetrahydrofolate + NADPH. The catalysed reaction is (6R)-5,10-methenyltetrahydrofolate + H2O = (6R)-10-formyltetrahydrofolate + H(+). The protein operates within one-carbon metabolism; tetrahydrofolate interconversion. Catalyzes the oxidation of 5,10-methylenetetrahydrofolate to 5,10-methenyltetrahydrofolate and then the hydrolysis of 5,10-methenyltetrahydrofolate to 10-formyltetrahydrofolate. This is Bifunctional protein FolD from Staphylococcus saprophyticus subsp. saprophyticus (strain ATCC 15305 / DSM 20229 / NCIMB 8711 / NCTC 7292 / S-41).